The following is a 405-amino-acid chain: Squamosa promoter-binding-like protein 6 (405 aa).

An SBP-type zinc finger spans residues 121-198 (NPLCQVYGCS…AGHNERRRKP (78 aa)). 8 residues coordinate Zn(2+): Cys-124, Cys-129, Cys-146, His-149, Cys-165, Cys-168, His-172, and Cys-184. A Bipartite nuclear localization signal motif is present at residues 181–197 (KRSCRRRLAGHNERRRK).

The cofactor is Zn(2+).

The protein resides in the nucleus. Functionally, trans-acting factor that binds specifically to the consensus nucleotide sequence 5'-TNCGTACAA-3'. This Arabidopsis thaliana (Mouse-ear cress) protein is Squamosa promoter-binding-like protein 6 (SPL6).